A 519-amino-acid chain; its full sequence is Cytochrome P450 52A13 (519 aa).

Residue C466 participates in heme binding.

The protein belongs to the cytochrome P450 family. Heme is required as a cofactor.

It is found in the membrane. Functionally, together with an NADPH cytochrome P450 the enzyme system catalyzes the terminal hydroxylation as the first step in the assimilation of alkanes and fatty acids. The polypeptide is Cytochrome P450 52A13 (CYP52A13) (Debaryomyces hansenii (Yeast)).